A 128-amino-acid chain; its full sequence is Small ribosomal subunit protein uS11 (128 aa).

This sequence belongs to the universal ribosomal protein uS11 family. As to quaternary structure, part of the 30S ribosomal subunit. Interacts with proteins S7 and S18. Binds to IF-3.

Located on the platform of the 30S subunit, it bridges several disparate RNA helices of the 16S rRNA. Forms part of the Shine-Dalgarno cleft in the 70S ribosome. The protein is Small ribosomal subunit protein uS11 of Desulfosudis oleivorans (strain DSM 6200 / JCM 39069 / Hxd3) (Desulfococcus oleovorans).